A 417-amino-acid polypeptide reads, in one-letter code: Gamma-glutamyl phosphate reductase (417 aa).

The protein belongs to the gamma-glutamyl phosphate reductase family.

Its subcellular location is the cytoplasm. The enzyme catalyses L-glutamate 5-semialdehyde + phosphate + NADP(+) = L-glutamyl 5-phosphate + NADPH + H(+). It participates in amino-acid biosynthesis; L-proline biosynthesis; L-glutamate 5-semialdehyde from L-glutamate: step 2/2. In terms of biological role, catalyzes the NADPH-dependent reduction of L-glutamate 5-phosphate into L-glutamate 5-semialdehyde and phosphate. The product spontaneously undergoes cyclization to form 1-pyrroline-5-carboxylate. This Meiothermus ruber protein is Gamma-glutamyl phosphate reductase.